The primary structure comprises 241 residues: Small ribosomal subunit protein eS4 (241 aa).

An S4 RNA-binding domain is found at 37 to 100 (LPIVVWARDQ…GKHYRILRDK (64 aa)).

The protein belongs to the eukaryotic ribosomal protein eS4 family.

The chain is Small ribosomal subunit protein eS4 from Methanospirillum hungatei JF-1 (strain ATCC 27890 / DSM 864 / NBRC 100397 / JF-1).